The chain runs to 305 residues: Coiled-coil domain-containing protein 69 (305 aa).

The N-myristoyl glycine moiety is linked to residue glycine 2. Residues 13–41 (LRKKKRQKAHQEGLTSKELNDLNAKSQEP) form a disordered region. Coiled-coil stretches lie at residues 42–167 (NELL…SVLS) and 216–278 (MERN…KEQN).

This sequence belongs to the CCDC69 family.

The protein resides in the cytoplasm. Its subcellular location is the cytoskeleton. It localises to the spindle. It is found in the midbody. Functionally, may act as a scaffold to regulate the recruitment and assembly of spindle midzone components. This is Coiled-coil domain-containing protein 69 (ccdc69) from Xenopus tropicalis (Western clawed frog).